A 331-amino-acid polypeptide reads, in one-letter code: DNA polymerase IV (331 aa).

The UmuC domain occupies 1–174 (FFAAVEMRDN…LPLAKIPGVG (174 aa)). D92 contacts Mg(2+). E93 is a catalytic residue.

Belongs to the DNA polymerase type-Y family. Monomer. It depends on Mg(2+) as a cofactor.

The protein resides in the cytoplasm. The catalysed reaction is DNA(n) + a 2'-deoxyribonucleoside 5'-triphosphate = DNA(n+1) + diphosphate. Functionally, poorly processive, error-prone DNA polymerase involved in untargeted mutagenesis. Copies undamaged DNA at stalled replication forks, which arise in vivo from mismatched or misaligned primer ends. These misaligned primers can be extended by PolIV. Exhibits no 3'-5' exonuclease (proofreading) activity. May be involved in translesional synthesis, in conjunction with the beta clamp from PolIII. The sequence is that of DNA polymerase IV from Escherichia fergusonii.